Consider the following 431-residue polypeptide: Phosphate regulon sensor protein PhoR (431 aa).

The Cytoplasmic segment spans residues 1-9 (MLERLSWKR). A helical membrane pass occupies residues 10–28 (LVLELLLCCLPAFILGAFF). Topologically, residues 29–32 (GYLP) are periplasmic. A helical membrane pass occupies residues 33–51 (WFLLASVTGLLIWHFWNLL). Over 52–431 (RLSWWLWVDR…PERLIAKNSD (380 aa)) the chain is Cytoplasmic. The 77-residue stretch at 96–172 (LIKRFRSGAE…RPLNLVLNTG (77 aa)) folds into the PAS domain. A Histidine kinase domain is found at 210–425 (NVSHELRTPL…RFSFVIPERL (216 aa)). Phosphohistidine; by autocatalysis is present on His-213.

The protein localises to the cell inner membrane. It carries out the reaction ATP + protein L-histidine = ADP + protein N-phospho-L-histidine.. Its function is as follows. Member of the two-component regulatory system PhoR/PhoB involved in the phosphate regulon genes expression. PhoR may function as a membrane-associated protein kinase that phosphorylates PhoB in response to environmental signals. This is Phosphate regulon sensor protein PhoR (phoR) from Escherichia coli (strain K12).